A 204-amino-acid polypeptide reads, in one-letter code: Guanylate kinase (204 aa).

One can recognise a Guanylate kinase-like domain in the interval Gly4 to Gln182. Ala11–Thr18 is a binding site for ATP.

Belongs to the guanylate kinase family.

The protein localises to the cytoplasm. It carries out the reaction GMP + ATP = GDP + ADP. In terms of biological role, essential for recycling GMP and indirectly, cGMP. The sequence is that of Guanylate kinase from Methylococcus capsulatus (strain ATCC 33009 / NCIMB 11132 / Bath).